The following is a 330-amino-acid chain: Transcription factor TGA5 (330 aa).

Over residues 1 to 13 (MGDTSPRTSVSTD) the composition is skewed to polar residues. Positions 1 to 64 (MGDTSPRTSV…REAARKSRLR (64 aa)) are disordered. The segment covering 35 to 47 (SSDRSKSKMDQKT) has biased composition (basic and acidic residues). The 64-residue stretch at 44 to 107 (DQKTLRRLAQ…SSGDQAHSTA (64 aa)) folds into the bZIP domain. 2 coiled-coil regions span residues 45–98 (QKTL…FISS) and 211–244 (EQQSLDINNLQQSSQQAEDALSQGMDNLQQSLAD). A basic motif region spans residues 46-66 (KTLRRLAQNREAARKSRLRKK). The leucine-zipper stretch occupies residues 72–86 (LENSRLKLTQLEQEL). Residues 111–327 (AMAFDVEYRR…RALSSLWLAR (217 aa)) enclose the DOG1 domain.

The protein belongs to the bZIP family. As to quaternary structure, binds DNA as a dimer. Interaction with the Dof domain protein OBP1 enhances the binding to the ocs element. Interacts with NPR1, NPR3 and NPR4. In terms of tissue distribution, predominantly expressed in roots.

It localises to the nucleus. Functionally, transcriptional activator that binds specifically to the DNA sequence 5'-TGACG-3'. Recognizes ocs elements like the as-1 motif of the cauliflower mosaic virus 35S promoter. Binding to the as-1-like cis elements mediate auxin- and salicylic acid-inducible transcription. May be involved in the induction of the systemic acquired resistance (SAR) via its interaction with NPR1. Could also bind to the Hex-motif (5'-TGACGTGG-3') another cis-acting element found in plant histone promoters. The protein is Transcription factor TGA5 (TGA5) of Arabidopsis thaliana (Mouse-ear cress).